The chain runs to 249 residues: 3-deoxy-manno-octulosonate cytidylyltransferase (249 aa).

It belongs to the KdsB family.

It is found in the cytoplasm. The enzyme catalyses 3-deoxy-alpha-D-manno-oct-2-ulosonate + CTP = CMP-3-deoxy-beta-D-manno-octulosonate + diphosphate. Its pathway is nucleotide-sugar biosynthesis; CMP-3-deoxy-D-manno-octulosonate biosynthesis; CMP-3-deoxy-D-manno-octulosonate from 3-deoxy-D-manno-octulosonate and CTP: step 1/1. It functions in the pathway bacterial outer membrane biogenesis; lipopolysaccharide biosynthesis. Its function is as follows. Activates KDO (a required 8-carbon sugar) for incorporation into bacterial lipopolysaccharide in Gram-negative bacteria. In Photorhabdus laumondii subsp. laumondii (strain DSM 15139 / CIP 105565 / TT01) (Photorhabdus luminescens subsp. laumondii), this protein is 3-deoxy-manno-octulosonate cytidylyltransferase.